We begin with the raw amino-acid sequence, 338 residues long: 5-dehydro-2-deoxygluconokinase (338 aa).

This sequence belongs to the carbohydrate kinase PfkB family.

It carries out the reaction 5-dehydro-2-deoxy-D-gluconate + ATP = 6-phospho-5-dehydro-2-deoxy-D-gluconate + ADP + H(+). The protein operates within polyol metabolism; myo-inositol degradation into acetyl-CoA; acetyl-CoA from myo-inositol: step 5/7. Functionally, catalyzes the phosphorylation of 5-dehydro-2-deoxy-D-gluconate (2-deoxy-5-keto-D-gluconate or DKG) to 6-phospho-5-dehydro-2-deoxy-D-gluconate (DKGP). The polypeptide is 5-dehydro-2-deoxygluconokinase (Mesomycoplasma hyopneumoniae (strain J / ATCC 25934 / NCTC 10110) (Mycoplasma hyopneumoniae)).